The following is a 682-amino-acid chain: Heat shock 70 kDa protein, mitochondrial (682 aa).

The transit peptide at 1-57 (MATAALLRSLRRREFATSSISAYRTLASNTKPSWCPSLVGAKWAGLARPFSSKPAGN) directs the protein to the mitochondrion. Positions 649–682 (GEHMAGGSSGGASGGGGAQGGDQPPEAEYEEVKK) are disordered. The span at 655-668 (GSSGGASGGGGAQG) shows a compositional bias: gly residues. The span at 673–682 (PEAEYEEVKK) shows a compositional bias: acidic residues.

This sequence belongs to the heat shock protein 70 family.

The protein localises to the mitochondrion. In Solanum tuberosum (Potato), this protein is Heat shock 70 kDa protein, mitochondrial (HSP68).